Reading from the N-terminus, the 348-residue chain is Protein RecA (348 aa).

Residue 65–72 coordinates ATP; the sequence is GPESSGKT.

This sequence belongs to the RecA family.

Its subcellular location is the cytoplasm. In terms of biological role, can catalyze the hydrolysis of ATP in the presence of single-stranded DNA, the ATP-dependent uptake of single-stranded DNA by duplex DNA, and the ATP-dependent hybridization of homologous single-stranded DNAs. It interacts with LexA causing its activation and leading to its autocatalytic cleavage. This is Protein RecA from Vibrio natriegens.